The chain runs to 197 residues: ATP-dependent Clp protease proteolytic subunit (197 aa).

Catalysis depends on Ser-102, which acts as the Nucleophile. The active site involves His-127.

The protein belongs to the peptidase S14 family. Fourteen ClpP subunits assemble into 2 heptameric rings which stack back to back to give a disk-like structure with a central cavity, resembling the structure of eukaryotic proteasomes.

Its subcellular location is the cytoplasm. It catalyses the reaction Hydrolysis of proteins to small peptides in the presence of ATP and magnesium. alpha-casein is the usual test substrate. In the absence of ATP, only oligopeptides shorter than five residues are hydrolyzed (such as succinyl-Leu-Tyr-|-NHMec, and Leu-Tyr-Leu-|-Tyr-Trp, in which cleavage of the -Tyr-|-Leu- and -Tyr-|-Trp bonds also occurs).. Cleaves peptides in various proteins in a process that requires ATP hydrolysis. Has a chymotrypsin-like activity. Plays a major role in the degradation of misfolded proteins. The chain is ATP-dependent Clp protease proteolytic subunit from Buchnera aphidicola subsp. Schizaphis graminum (strain Sg).